The sequence spans 338 residues: Holliday junction branch migration complex subunit RuvB (338 aa).

Residues 1–22 (MVDDERVVSPETADDHEDSVEK) form a disordered region. A large ATPase domain (RuvB-L) region spans residues 4 to 185 (DERVVSPETA…FGIVEHMAYY (182 aa)). Residues leucine 24, arginine 25, glycine 66, lysine 69, threonine 70, threonine 71, 132–134 (EDF), arginine 175, tyrosine 185, and arginine 222 each bind ATP. Threonine 70 contributes to the Mg(2+) binding site. Residues 186–257 (ETTDLQEIVL…IVDHALDLLR (72 aa)) are small ATPAse domain (RuvB-S). A head domain (RuvB-H) region spans residues 260 to 338 (SAGLDATDIK…HLGRTMPDNN (79 aa)). Residues arginine 315 and arginine 320 each coordinate DNA.

The protein belongs to the RuvB family. As to quaternary structure, homohexamer. Forms an RuvA(8)-RuvB(12)-Holliday junction (HJ) complex. HJ DNA is sandwiched between 2 RuvA tetramers; dsDNA enters through RuvA and exits via RuvB. An RuvB hexamer assembles on each DNA strand where it exits the tetramer. Each RuvB hexamer is contacted by two RuvA subunits (via domain III) on 2 adjacent RuvB subunits; this complex drives branch migration. In the full resolvosome a probable DNA-RuvA(4)-RuvB(12)-RuvC(2) complex forms which resolves the HJ.

Its subcellular location is the cytoplasm. The catalysed reaction is ATP + H2O = ADP + phosphate + H(+). The RuvA-RuvB-RuvC complex processes Holliday junction (HJ) DNA during genetic recombination and DNA repair, while the RuvA-RuvB complex plays an important role in the rescue of blocked DNA replication forks via replication fork reversal (RFR). RuvA specifically binds to HJ cruciform DNA, conferring on it an open structure. The RuvB hexamer acts as an ATP-dependent pump, pulling dsDNA into and through the RuvAB complex. RuvB forms 2 homohexamers on either side of HJ DNA bound by 1 or 2 RuvA tetramers; 4 subunits per hexamer contact DNA at a time. Coordinated motions by a converter formed by DNA-disengaged RuvB subunits stimulates ATP hydrolysis and nucleotide exchange. Immobilization of the converter enables RuvB to convert the ATP-contained energy into a lever motion, pulling 2 nucleotides of DNA out of the RuvA tetramer per ATP hydrolyzed, thus driving DNA branch migration. The RuvB motors rotate together with the DNA substrate, which together with the progressing nucleotide cycle form the mechanistic basis for DNA recombination by continuous HJ branch migration. Branch migration allows RuvC to scan DNA until it finds its consensus sequence, where it cleaves and resolves cruciform DNA. This Levilactobacillus brevis (strain ATCC 367 / BCRC 12310 / CIP 105137 / JCM 1170 / LMG 11437 / NCIMB 947 / NCTC 947) (Lactobacillus brevis) protein is Holliday junction branch migration complex subunit RuvB.